Here is a 331-residue protein sequence, read N- to C-terminus: Adenosine deaminase (331 aa).

Zn(2+) contacts are provided by His-12 and His-14. Substrate contacts are provided by His-14 and Asp-16. Zn(2+) is bound at residue His-197. Glu-200 acts as the Proton donor in catalysis. Asp-278 serves as a coordination point for Zn(2+).

The protein belongs to the metallo-dependent hydrolases superfamily. Adenosine and AMP deaminases family. Adenosine deaminase subfamily. Zn(2+) serves as cofactor.

It catalyses the reaction adenosine + H2O + H(+) = inosine + NH4(+). The catalysed reaction is 2'-deoxyadenosine + H2O + H(+) = 2'-deoxyinosine + NH4(+). Its function is as follows. Catalyzes the hydrolytic deamination of adenosine and 2-deoxyadenosine. This chain is Adenosine deaminase, found in Shewanella halifaxensis (strain HAW-EB4).